A 441-amino-acid chain; its full sequence is MVQVNFQVLAELDAAGRAALLRRSETDLSMFLEKVGPILEAVRTEGDAALVRFGRELDRAEGLTREGLKVTEAEFDEAFGLVEPEIVAAIRFAIGNIRTFHEEQAPEPMWLKELRPGAFAGDRFTPIRSVALYVPRGKGSFPSVTMMTSVPAVVAKVPQIAIFTPPAPDGRVDAATLVAARLAGVETVYKVGGAQAVAAAAYGTETVTPALKIVGPGSPWVVAAKRLLAGVIDPGLPAGPSESIILADETVHGGLAALDLLIEAEHGPDSSAWLVTHSRQVAEEALAALPGHWSAMTPQRVDFSQAVLCGRAGGIVLTGSAEESHAFVNDYAPEHLQILSEKPFEHLGRITEAAEVLMGPHTPITIANFCLGPNAVLPTSRGARTWGPLSVHDFLRRSSVGYVTAPAYPELAEVAKRLAEYEGFSSHANAVGPMRDAYLKR.

Histidine 266 is a binding site for Zn(2+). Catalysis depends on proton acceptor residues glutamate 334 and histidine 335. Histidine 427 is a binding site for Zn(2+).

This sequence belongs to the histidinol dehydrogenase family. Zn(2+) is required as a cofactor.

This is Histidinol dehydrogenase homolog from Cereibacter sphaeroides (strain ATCC 17023 / DSM 158 / JCM 6121 / CCUG 31486 / LMG 2827 / NBRC 12203 / NCIMB 8253 / ATH 2.4.1.) (Rhodobacter sphaeroides).